Reading from the N-terminus, the 535-residue chain is Bifunctional purine biosynthesis protein PurH (535 aa).

The region spanning 1 to 148 (MNNARPIRRA…KNHKDTTIIV (148 aa)) is the MGS-like domain.

Belongs to the PurH family.

The enzyme catalyses (6R)-10-formyltetrahydrofolate + 5-amino-1-(5-phospho-beta-D-ribosyl)imidazole-4-carboxamide = 5-formamido-1-(5-phospho-D-ribosyl)imidazole-4-carboxamide + (6S)-5,6,7,8-tetrahydrofolate. The catalysed reaction is IMP + H2O = 5-formamido-1-(5-phospho-D-ribosyl)imidazole-4-carboxamide. It participates in purine metabolism; IMP biosynthesis via de novo pathway; 5-formamido-1-(5-phospho-D-ribosyl)imidazole-4-carboxamide from 5-amino-1-(5-phospho-D-ribosyl)imidazole-4-carboxamide (10-formyl THF route): step 1/1. The protein operates within purine metabolism; IMP biosynthesis via de novo pathway; IMP from 5-formamido-1-(5-phospho-D-ribosyl)imidazole-4-carboxamide: step 1/1. The protein is Bifunctional purine biosynthesis protein PurH of Shewanella woodyi (strain ATCC 51908 / MS32).